We begin with the raw amino-acid sequence, 533 residues long: UDP-glucuronosyltransferase 1-2 (533 aa).

The signal sequence occupies residues 1 to 27 (MDTGLCVPLRGISGLLLLLCALPWAEG). 3 N-linked (GlcNAc...) asparagine glycosylation sites follow: asparagine 141, asparagine 295, and asparagine 433. A helical membrane pass occupies residues 491–511 (VIGFLLAIVLTVVFIVFKCCA).

It belongs to the UDP-glycosyltransferase family. In terms of tissue distribution, expressed in kidney.

The protein resides in the microsome. The protein localises to the endoplasmic reticulum membrane. It catalyses the reaction glucuronate acceptor + UDP-alpha-D-glucuronate = acceptor beta-D-glucuronoside + UDP + H(+). Its function is as follows. UDPGT is of major importance in the conjugation and subsequent elimination of potentially toxic xenobiotics and endogenous compounds. This chain is UDP-glucuronosyltransferase 1-2 (Ugt1a2), found in Mus musculus (Mouse).